We begin with the raw amino-acid sequence, 160 residues long: Crossover junction endodeoxyribonuclease RuvC (160 aa).

Catalysis depends on residues D9, E68, and D141. Positions 9, 68, and 141 each coordinate Mg(2+).

Belongs to the RuvC family. In terms of assembly, homodimer which binds Holliday junction (HJ) DNA. The HJ becomes 2-fold symmetrical on binding to RuvC with unstacked arms; it has a different conformation from HJ DNA in complex with RuvA. In the full resolvosome a probable DNA-RuvA(4)-RuvB(12)-RuvC(2) complex forms which resolves the HJ. It depends on Mg(2+) as a cofactor.

It is found in the cytoplasm. It carries out the reaction Endonucleolytic cleavage at a junction such as a reciprocal single-stranded crossover between two homologous DNA duplexes (Holliday junction).. Functionally, the RuvA-RuvB-RuvC complex processes Holliday junction (HJ) DNA during genetic recombination and DNA repair. Endonuclease that resolves HJ intermediates. Cleaves cruciform DNA by making single-stranded nicks across the HJ at symmetrical positions within the homologous arms, yielding a 5'-phosphate and a 3'-hydroxyl group; requires a central core of homology in the junction. The consensus cleavage sequence is 5'-(A/T)TT(C/G)-3'. Cleavage occurs on the 3'-side of the TT dinucleotide at the point of strand exchange. HJ branch migration catalyzed by RuvA-RuvB allows RuvC to scan DNA until it finds its consensus sequence, where it cleaves and resolves the cruciform DNA. The polypeptide is Crossover junction endodeoxyribonuclease RuvC (Campylobacter jejuni subsp. jejuni serotype O:23/36 (strain 81-176)).